Reading from the N-terminus, the 225-residue chain is Uridylate kinase (225 aa).

Residue 9 to 10 (GS) coordinates ATP. Residue Gly46 coordinates UMP. ATP contacts are provided by Gly47 and Arg51. UMP is bound by residues Asp67 and 115–121 (THPAHTT). 4 residues coordinate ATP: Thr141, Asn142, Tyr147, and Asp150.

This sequence belongs to the UMP kinase family. As to quaternary structure, homohexamer.

It is found in the cytoplasm. It carries out the reaction UMP + ATP = UDP + ADP. Its pathway is pyrimidine metabolism; CTP biosynthesis via de novo pathway; UDP from UMP (UMPK route): step 1/1. Inhibited by UTP. Its function is as follows. Catalyzes the reversible phosphorylation of UMP to UDP. The protein is Uridylate kinase of Methanococcus aeolicus (strain ATCC BAA-1280 / DSM 17508 / OCM 812 / Nankai-3).